Reading from the N-terminus, the 398-residue chain is UDP-D-apiose/UDP-D-xylose synthase (398 aa).

An NAD(+)-binding site is contributed by 57–88; it reads DVYCDKIRHLVDPAPPHLHGRISFHRLNIKND. Arginine 190 provides a ligand contact to substrate. The Proton acceptor role is filled by tyrosine 193. 193–197 provides a ligand contact to NAD(+); it reads YACAK. Asparagine 222 lines the substrate pocket. Arginine 243 contacts NAD(+). Substrate-binding positions include 244–248, 261–268, and 345–349; these read VLACF, VDGGQSQR, and DSDKR.

The protein belongs to the NAD(P)-dependent epimerase/dehydratase family. Homodimer. NAD(+) serves as cofactor.

The protein localises to the cytoplasm. In terms of biological role, catalyzes the conversion of UDP-D-glucuronate to a mixture of UDP-D-apiose and UDP-D-xylose. D-Apiose (3-C-hydroxymethyl-d-erythrose) is the only plant cell wall monosaccharide with a branched carbon skeleton and found in rhamnogalacturonan II (RG-II), apiogalacturonan, and several apioglycosides. The sequence is that of UDP-D-apiose/UDP-D-xylose synthase from Oryza sativa subsp. japonica (Rice).